The primary structure comprises 85 residues: RNA-binding protein Hfq (85 aa).

Residues 10–70 (DAFLNQVRKE…ISTIIPQRPV (61 aa)) enclose the Sm domain.

It belongs to the Hfq family. As to quaternary structure, homohexamer.

RNA chaperone that binds small regulatory RNA (sRNAs) and mRNAs to facilitate mRNA translational regulation in response to envelope stress, environmental stress and changes in metabolite concentrations. Also binds with high specificity to tRNAs. In Carboxydothermus hydrogenoformans (strain ATCC BAA-161 / DSM 6008 / Z-2901), this protein is RNA-binding protein Hfq.